The following is a 297-amino-acid chain: MEDYTKIEKIGEGTYGVVYKGRHKTTGQVVAMKKIRLESEEEGVPSTAIREISLLKELRHPNIVSLQDVLMQDSRLYLIFEFLSMDLKKYLDSIPPGQYMDSSLVKSYLYQILQGIVFCHSRRVLHRDLKPQNLLIDDKGTIKLADFGLARAFGIPIRVYTHEVVTLWYRSPEVLLGSARYSTPVDIWSIGTIFAELATKKPLFHGDSEIDQLFRIFRALGTPNNEVWPEVESLQDYKNTFPKWKPGSLASHVKNLDENGLDLLSKMLIYDPAKRISGKMALNHPYFNDLDNQIKKM.

Methionine 1 carries the post-translational modification N-acetylmethionine. Position 4 is a phosphotyrosine; by PKR (tyrosine 4). A Protein kinase domain is found at 4-287 (YTKIEKIGEG…GKMALNHPYF (284 aa)). N6-acetyllysine; alternate occurs at positions 6 and 9. Glycyl lysine isopeptide (Lys-Gly) (interchain with G-Cter in SUMO2); alternate cross-links involve residues lysine 6 and lysine 9. 10-18 (IGEGTYGVV) provides a ligand contact to ATP. Threonine 14 is subject to Phosphothreonine; by PKMYT1. Tyrosine 15 is modified (phosphotyrosine; by PKMYT1, WEE1, WEE2 and PKC/PRKCD). Phosphotyrosine is present on tyrosine 19. Lysine 20 is covalently cross-linked (Glycyl lysine isopeptide (Lys-Gly) (interchain with G-Cter in SUMO2)). Lysine 33 is a binding site for ATP. A Phosphoserine modification is found at serine 39. Tyrosine 77 carries the post-translational modification Phosphotyrosine. Catalysis depends on aspartate 128, which acts as the Proton acceptor. A Glycyl lysine isopeptide (Lys-Gly) (interchain with G-Cter in SUMO2) cross-link involves residue lysine 139. Threonine 141 carries the phosphothreonine modification. Threonine 161 is modified (phosphothreonine; by CAK). Serine 178 bears the Phosphoserine mark. Threonine 222 is subject to Phosphothreonine. The residue at position 245 (lysine 245) is an N6-succinyllysine. Serine 248 is subject to Phosphoserine.

Belongs to the protein kinase superfamily. CMGC Ser/Thr protein kinase family. CDC2/CDKX subfamily. Forms a stable but non-covalent complex with a regulatory subunit and with a cyclin. The cyclin subunit imparts substrate specificity to the complex. Interacts with cyclins-B (CCNB1, CCNB2 and CCNB3) to form a serine/threonine kinase holoenzyme complex also known as maturation promoting factor (MPF). Promotes G2-M transition when in complex with a cyclin-B. Can also form CDK1-cylin-D and CDK1-cyclin-E complexes that phosphorylate RB1 in vitro. Associates with cyclins-A and B1 during S-phase in regenerating hepatocytes. Interacts with DLGAP5. Binds to the CDK inhibitors CDKN1A/p21 and CDKN1B/p27. Interacts with catalytically active CCNB1 and RALBP1 during mitosis to form an endocytotic complex during interphase. Interacts with FANCC. Interacts with CEP63; this interaction recruits CDK1 to centrosomes. Interacts with CENPA. Interacts with NR1D1. Interacts with proteasome subunit PSMA8; to participate in meiosis progression during spermatogenesis. As to quaternary structure, unable to complex with cyclin-B1 and also fails to bind to CDKN1A/p21. In terms of assembly, (Microbial infection) Interacts with severe fever with thrombocytopenia syndrome virus (SFTSV) NSs; this interaction is inclusion body dependent, it inhibits the formation and nuclear import of the cyclin B1-CDK1 complex and leads to cell cycle arrest. Post-translationally, phosphorylation at Thr-161 by CAK/CDK7 activates kinase activity. Phosphorylation at Thr-14 and Tyr-15 by PKMYT1 prevents nuclear translocation. Phosphorylation at Tyr-15 by WEE1 and WEE2 inhibits the protein kinase activity and acts as a negative regulator of entry into mitosis (G2 to M transition). Phosphorylation by PKMYT1 and WEE1 takes place during mitosis to keep CDK1-cyclin-B complexes inactive until the end of G2. By the end of G2, PKMYT1 and WEE1 are inactivated, but CDC25A and CDC25B are activated. Dephosphorylation by active CDC25A and CDC25B at Thr-14 and Tyr-15, leads to CDK1 activation at the G2-M transition. Phosphorylation at Tyr-15 by WEE2 during oogenesis is required to maintain meiotic arrest in oocytes during the germinal vesicle (GV) stage, a long period of quiescence at dictyate prophase I, leading to prevent meiotic reentry. Phosphorylation by WEE2 is also required for metaphase II exit during egg activation to ensure exit from meiosis in oocytes and promote pronuclear formation. Phosphorylated at Tyr-4 by PKR/EIF2AK2 upon genotoxic stress. This phosphorylation triggers CDK1 polyubiquitination and subsequent proteolysis, thus leading to G2 arrest. In response to UV irradiation, phosphorylation at Tyr-15 by PRKCD activates the G2/M DNA damage checkpoint. In terms of processing, polyubiquitinated upon genotoxic stress. As to expression, found in breast cancer tissues.

It is found in the nucleus. It localises to the cytoplasm. The protein localises to the mitochondrion. Its subcellular location is the cytoskeleton. The protein resides in the microtubule organizing center. It is found in the centrosome. It localises to the spindle. The catalysed reaction is L-seryl-[protein] + ATP = O-phospho-L-seryl-[protein] + ADP + H(+). It carries out the reaction L-threonyl-[protein] + ATP = O-phospho-L-threonyl-[protein] + ADP + H(+). It catalyses the reaction [DNA-directed RNA polymerase] + ATP = phospho-[DNA-directed RNA polymerase] + ADP + H(+). Its activity is regulated as follows. Phosphorylation at Thr-14 or Tyr-15 inactivates the enzyme, while phosphorylation at Thr-161 activates it. Activated through a multistep process; binding to cyclin-B is required for relocation of cyclin-kinase complexes to the nucleus, activated by CAK/CDK7-mediated phosphorylation on Thr-161, and CDC25-mediated dephosphorylation of inhibitory phosphorylation on Thr-14 and Tyr-15. Activity is restricted during S-phase in an ATR-dependent manner to prevent premature entry into G2. Repressed by the CDK inhibitors CDKN1A/p21 and CDKN1B/p27 during the G1 phase and by CDKN1A/p21 at the G1-S checkpoint upon DNA damage. Transient activation by rapid and transient dephosphorylation at Tyr-15 triggered by TGFB1. Inhibited by flavopiridol and derivatives, pyrimidine derivatives, pyridine derivatives, purine derivatives, staurosporine, paullones, oxoindoles, indazole analogs, indolin-2-ones, pyrazolo[3,4-b]pyridines, imidazo[1,2-a]pyridine (AZ703), thiazolinone analogs(RO-3306), thiazol urea, macrocyclic quinoxalin-2-one, pyrrolo[2,3-a]carbazole, pyrazolo[1,5-a]-1,3,5-triazine, pyrazolo[1,5-a]pyrimidine (Dinaciclib, SCH 727965), 2-(1-ethyl-2-hydroxyethylamino)-6-benzylamino-9-isopropylpurine (roscovitine), olomoucine, AG-024322, AT-7519, P276-00, R547/Ro-4584820 and SNS-032/BMS-387032. Functionally, plays a key role in the control of the eukaryotic cell cycle by modulating the centrosome cycle as well as mitotic onset; promotes G2-M transition via association with multiple interphase cyclins. Phosphorylates PARVA/actopaxin, APC, AMPH, APC, BARD1, Bcl-xL/BCL2L1, BRCA2, CALD1, CASP8, CDC7, CDC20, CDC25A, CDC25C, CC2D1A, CENPA, CSNK2 proteins/CKII, FZR1/CDH1, CDK7, CEBPB, CHAMP1, DMD/dystrophin, EEF1 proteins/EF-1, EZH2, KIF11/EG5, EGFR, FANCG, FOS, GFAP, GOLGA2/GM130, GRASP1, UBE2A/hHR6A, HIST1H1 proteins/histone H1, HMGA1, HIVEP3/KRC, KAT5, LMNA, LMNB, LBR, MKI67, LATS1, MAP1B, MAP4, MARCKS, MCM2, MCM4, MKLP1, MLST8, MYB, NEFH, NFIC, NPC/nuclear pore complex, PITPNM1/NIR2, NPM1, NCL, NUCKS1, NPM1/numatrin, ORC1, PRKAR2A, EEF1E1/p18, EIF3F/p47, p53/TP53, NONO/p54NRB, PAPOLA, PLEC/plectin, RB1, TPPP, UL40/R2, RAB4A, RAP1GAP, RBBP8/CtIP, RCC1, RPS6KB1/S6K1, KHDRBS1/SAM68, ESPL1, SKI, BIRC5/survivin, STIP1, TEX14, beta-tubulins, MAPT/TAU, NEDD1, VIM/vimentin, TK1, FOXO1, RUNX1/AML1, SAMHD1, SIRT2, CGAS and RUNX2. CDK1/CDC2-cyclin-B controls pronuclear union in interphase fertilized eggs. Essential for early stages of embryonic development. During G2 and early mitosis, CDC25A/B/C-mediated dephosphorylation activates CDK1/cyclin complexes which phosphorylate several substrates that trigger at least centrosome separation, Golgi dynamics, nuclear envelope breakdown and chromosome condensation. Once chromosomes are condensed and aligned at the metaphase plate, CDK1 activity is switched off by WEE1- and PKMYT1-mediated phosphorylation to allow sister chromatid separation, chromosome decondensation, reformation of the nuclear envelope and cytokinesis. Phosphorylates KRT5 during prometaphase and metaphase. Inactivated by PKR/EIF2AK2- and WEE1-mediated phosphorylation upon DNA damage to stop cell cycle and genome replication at the G2 checkpoint thus facilitating DNA repair. Reactivated after successful DNA repair through WIP1-dependent signaling leading to CDC25A/B/C-mediated dephosphorylation and restoring cell cycle progression. Catalyzes lamin (LMNA, LMNB1 and LMNB2) phosphorylation at the onset of mitosis, promoting nuclear envelope breakdown. In proliferating cells, CDK1-mediated FOXO1 phosphorylation at the G2-M phase represses FOXO1 interaction with 14-3-3 proteins and thereby promotes FOXO1 nuclear accumulation and transcription factor activity, leading to cell death of postmitotic neurons. The phosphorylation of beta-tubulins regulates microtubule dynamics during mitosis. NEDD1 phosphorylation promotes PLK1-mediated NEDD1 phosphorylation and subsequent targeting of the gamma-tubulin ring complex (gTuRC) to the centrosome, an important step for spindle formation. In addition, CC2D1A phosphorylation regulates CC2D1A spindle pole localization and association with SCC1/RAD21 and centriole cohesion during mitosis. The phosphorylation of Bcl-xL/BCL2L1 after prolongated G2 arrest upon DNA damage triggers apoptosis. In contrast, CASP8 phosphorylation during mitosis prevents its activation by proteolysis and subsequent apoptosis. This phosphorylation occurs in cancer cell lines, as well as in primary breast tissues and lymphocytes. EZH2 phosphorylation promotes H3K27me3 maintenance and epigenetic gene silencing. CALD1 phosphorylation promotes Schwann cell migration during peripheral nerve regeneration. CDK1-cyclin-B complex phosphorylates NCKAP5L and mediates its dissociation from centrosomes during mitosis. Regulates the amplitude of the cyclic expression of the core clock gene BMAL1 by phosphorylating its transcriptional repressor NR1D1, and this phosphorylation is necessary for SCF(FBXW7)-mediated ubiquitination and proteasomal degradation of NR1D1. Phosphorylates EML3 at 'Thr-881' which is essential for its interaction with HAUS augmin-like complex and TUBG1. Phosphorylates CGAS during mitosis, leading to its inhibition, thereby preventing CGAS activation by self DNA during mitosis. Phosphorylates SKA3 on multiple sites during mitosis which promotes SKA3 binding to the NDC80 complex and anchoring of the SKA complex to kinetochores, to enable stable attachment of mitotic spindle microtubules to kinetochores. (Microbial infection) Acts as a receptor for hepatitis C virus (HCV) in hepatocytes and facilitates its cell entry. The chain is Cyclin-dependent kinase 1 (CDK1) from Homo sapiens (Human).